The sequence spans 447 residues: Zinc finger protein ZIC 1 (447 aa).

The C2H2-type 1; atypical zinc finger occupies 225-260 (LICKWIEPEQLANPKKSCNKTFSTMHELVTHVTVEH). The C2H2-type 2; atypical zinc finger occupies 269-296 (HICFWEECPREGKPFKAKYKLVNHIRVH). 3 C2H2-type zinc fingers span residues 302 to 326 (FPCP…KRTH), 332 to 356 (FKCE…MHVH), and 362 to 384 (YLCK…MKVH). The tract at residues 375-431 (SSLRKHMKVHESSSQGSQPSPAASSGYESSTPPTIVSPSTDNPTTSSLSPSSSAVHH) is disordered. A compositionally biased stretch (low complexity) spans 386-427 (SSSQGSQPSPAASSGYESSTPPTIVSPSTDNPTTSSLSPSSS).

It belongs to the GLI C2H2-type zinc-finger protein family. As to quaternary structure, interacts (via the C2H2-type domains 3, 4 and 5) with MDFIC (via the C2H2-type domains 3, 4 and 5). Interacts with GLI1; the interaction enhances transcription activation. Interacts with GLI2. Interacts with GLI3; the interaction enhances transcription activation. As to expression, CNS. A high level expression is seen in the cerebellum. Detected in the nuclei of the cerebellar granule cell lineage from the progenitor cells of the external germinal layer to the postmigrated cells of the internal granular layer. Detected in medulloblastoma (26/29 cases), but not present in all other tumors examined.

It localises to the nucleus. The protein localises to the cytoplasm. In terms of biological role, acts as a transcriptional activator. Involved in neurogenesis. Plays important roles in the early stage of organogenesis of the CNS, as well as during dorsal spinal cord development and maturation of the cerebellum. Involved in the spatial distribution of mossy fiber (MF) neurons within the pontine gray nucleus (PGN). Plays a role in the regulation of MF axon pathway choice. Promotes MF migration towards ipsilaterally-located cerebellar territories. May have a role in shear flow mechanotransduction in osteocytes. Retains nuclear GLI1 and GLI3 in the cytoplasm. Binds to the minimal GLI-consensus sequence 5'-TGGGTGGTC-3'. This is Zinc finger protein ZIC 1 (ZIC1) from Homo sapiens (Human).